The sequence spans 256 residues: Protein CUSTOS (256 aa).

The span at 1–19 shows a compositional bias: low complexity; that stretch reads MVAPSGAMSDSENSSSSSS. Disordered regions lie at residues 1-83, 127-163, and 227-256; these read MVAP…TPEF, FTSIPGGHKKEASPRPCRKRQPPSSSEDSDEELQRCR, and IQKKRKKKAKKSREAPLCPPAECAAAKPEN. Ser-62 is subject to Phosphoserine. Basic and acidic residues predominate over residues 63–83; it reads RRHEVNQHEEDGNDLRTTPEF. Thr-80 is subject to Phosphothreonine. Ser-139 carries the phosphoserine modification. A Nucleolar localization signal (NLS) motif is present at residues 228-235; the sequence is QKKRKKKA. Over residues 228–237 the composition is skewed to basic residues; it reads QKKRKKKAKK. Residues 246-256 are compositionally biased toward low complexity; sequence PAECAAAKPEN.

Belongs to the CUSTOS family.

It is found in the nucleus envelope. In terms of biological role, plays a role in the regulation of Wnt signaling pathway during early development. The polypeptide is Protein CUSTOS (Mus musculus (Mouse)).